We begin with the raw amino-acid sequence, 81 residues long: MNSKFVLIVVFLAVVSICFANEVWDPEKCGCPPFDKVENAVCTKDRATYDNRCQFDCHAKFLSKSGKTLEESPCIESADPK.

The first 20 residues, 1–20, serve as a signal peptide directing secretion; that stretch reads MNSKFVLIVVFLAVVSICFA.

Belongs to the caterpillar 3 family. In terms of processing, contains 3 disulfide bonds. As to expression, expressed by the venom apparatus.

Its subcellular location is the secreted. Its function is as follows. Probable toxin. The protein is U-megalopygitoxin(3)-Mo4 of Megalopyge opercularis (Southern flannel moth).